A 499-amino-acid chain; its full sequence is Alpha-L-arabinofuranosidase B (499 aa).

The N-terminal stretch at M1–A18 is a signal peptide. N-linked (GlcNAc...) asparagine glycans are attached at residues N83 and N202.

Belongs to the glycosyl hydrolase 54 family.

The catalysed reaction is Hydrolysis of terminal non-reducing alpha-L-arabinofuranoside residues in alpha-L-arabinosides.. Its pathway is glycan metabolism; L-arabinan degradation. In terms of biological role, able to hydrolyze 1,5-, 1,3- and 1,2-alpha-linkages not only in L-arabinofuranosyl oligosaccharides, but also in polysac-charides containing terminal non-reducing L-arabinofuranoses in side chains, like L-arabinan, arabinogalactan and arabinoxylan. The polypeptide is Alpha-L-arabinofuranosidase B (abfB) (Aspergillus niger).